The following is a 696-amino-acid chain: SEC14 domain and spectrin repeat-containing protein 1 (696 aa).

One can recognise a CRAL-TRIO domain in the interval 1–153 (MEASVILPIL…DFGGSLTYDH (153 aa)). Spectrin repeat units lie at residues 275 to 378 (EEIQ…NLLQ), 381 to 494 (LEFH…LKML), and 500 to 602 (FKCE…HRLE).

Belongs to the SOLO family. As to quaternary structure, interacts (via the spectrin 1 repeat) with TRPC4 and TRPC5 (via CIRB domain). Interacts with CTNNB1. As to expression, broad expression. High expression in thalamus and brain. Significantly expressed in vasculature.

Functionally, may act as the primary docking protein directing membrane turnover and assembly of the transient receptor potential channels TRPC4 and TRPC5. Binds phospholipids such as phosphatidylinositol monophosphates, phosphatidylinositol diphosphates (PIP2s) and phosphatidic acid, but not less polar lipids including phosphatidylcholine, phosphatidylserine, and phosphatidylinositol. The binding to PIP2s is calcium dependent. Might be involved in the plasma membrane localization of CTNNB1. This is SEC14 domain and spectrin repeat-containing protein 1 (SESTD1) from Homo sapiens (Human).